The chain runs to 231 residues: PX domain-containing protein 1 (231 aa).

A PX domain is found at 1–134 (MASAVFEGTS…TFFERSPLDQ (134 aa)).

This Homo sapiens (Human) protein is PX domain-containing protein 1 (PXDC1).